The chain runs to 276 residues: 3-methyl-2-oxobutanoate hydroxymethyltransferase (276 aa).

Mg(2+)-binding residues include Asp-45 and Asp-84. 3-methyl-2-oxobutanoate is bound by residues 45–46 (DS), Asp-84, and Lys-114. A Mg(2+)-binding site is contributed by Glu-116. Glu-183 (proton acceptor) is an active-site residue.

Belongs to the PanB family. In terms of assembly, homodecamer; pentamer of dimers. Mg(2+) serves as cofactor.

It is found in the cytoplasm. It catalyses the reaction 3-methyl-2-oxobutanoate + (6R)-5,10-methylene-5,6,7,8-tetrahydrofolate + H2O = 2-dehydropantoate + (6S)-5,6,7,8-tetrahydrofolate. Its pathway is cofactor biosynthesis; (R)-pantothenate biosynthesis; (R)-pantoate from 3-methyl-2-oxobutanoate: step 1/2. Functionally, catalyzes the reversible reaction in which hydroxymethyl group from 5,10-methylenetetrahydrofolate is transferred onto alpha-ketoisovalerate to form ketopantoate. The protein is 3-methyl-2-oxobutanoate hydroxymethyltransferase of Carboxydothermus hydrogenoformans (strain ATCC BAA-161 / DSM 6008 / Z-2901).